The following is a 431-amino-acid chain: UDP-N-acetylmuramate--L-alanine ligase (431 aa).

Residue 108–114 (GAHGKST) coordinates ATP.

It belongs to the MurCDEF family.

It localises to the cytoplasm. The catalysed reaction is UDP-N-acetyl-alpha-D-muramate + L-alanine + ATP = UDP-N-acetyl-alpha-D-muramoyl-L-alanine + ADP + phosphate + H(+). It participates in cell wall biogenesis; peptidoglycan biosynthesis. Cell wall formation. This chain is UDP-N-acetylmuramate--L-alanine ligase, found in Campylobacter jejuni (strain RM1221).